Reading from the N-terminus, the 320-residue chain is o-succinylbenzoate synthase (320 aa).

Lysine 133 functions as the Proton donor in the catalytic mechanism. Residues aspartate 161, glutamate 190, and aspartate 213 each contribute to the Mg(2+) site. Lysine 235 functions as the Proton acceptor in the catalytic mechanism.

The protein belongs to the mandelate racemase/muconate lactonizing enzyme family. MenC type 1 subfamily. A divalent metal cation is required as a cofactor.

It catalyses the reaction (1R,6R)-6-hydroxy-2-succinyl-cyclohexa-2,4-diene-1-carboxylate = 2-succinylbenzoate + H2O. It participates in quinol/quinone metabolism; 1,4-dihydroxy-2-naphthoate biosynthesis; 1,4-dihydroxy-2-naphthoate from chorismate: step 4/7. The protein operates within quinol/quinone metabolism; menaquinone biosynthesis. Functionally, converts 2-succinyl-6-hydroxy-2,4-cyclohexadiene-1-carboxylate (SHCHC) to 2-succinylbenzoate (OSB). This Salmonella choleraesuis (strain SC-B67) protein is o-succinylbenzoate synthase.